A 463-amino-acid polypeptide reads, in one-letter code: Heterogeneous nuclear ribonucleoprotein K (463 aa).

Position 1 is an N-acetylmethionine (methionine 1). Residues 1 to 37 (METEQPEETFPNTETNGEFGKRPAEDMEEEQAFKRSR) form a disordered region. The interval 1–276 (METEQPEETF…GRGGRPMPPS (276 aa)) is necessary for interaction with DDX1. Basic and acidic residues predominate over residues 19-37 (FGKRPAEDMEEEQAFKRSR). Lysine 34 bears the N6-acetyllysine; alternate mark. A Glycyl lysine isopeptide (Lys-Gly) (interchain with G-Cter in SUMO1); alternate cross-link involves residue lysine 34. Residue lysine 34 forms a Glycyl lysine isopeptide (Lys-Gly) (interchain with G-Cter in SUMO2); alternate linkage. An interaction with ASFV p30 region spans residues 35–197 (RSRNTDEMVE…STDRVVLIGG (163 aa)). Residue serine 36 is modified to Phosphoserine. Position 39 is a phosphothreonine (threonine 39). Positions 42–104 (MVELRILLQS…ETIGEILKKI (63 aa)) constitute a KH 1 domain. Glycyl lysine isopeptide (Lys-Gly) (interchain with G-Cter in SUMO2) cross-links involve residues lysine 52 and lysine 60. 2 tandem repeats follow at residues 54–76 (AGAVIGKGGKNIKALRTDYNASV) and 59–62 (GKGG). Residues 54–421 (AGAVIGKGGK…QIRHESGASI (368 aa)) are 2 X 22 AA approximate repeats. Residues 59 to 407 (GKGGKNIKAL…LAGSIIGKGG (349 aa)) form a 5 X 4 AA repeats of G-X-G-G region. Phosphoserine occurs at positions 75 and 116. A KH 2 domain is found at 144 to 209 (DCELRLLIHQ…DRVVECIKII (66 aa)). Residue lysine 163 forms a Glycyl lysine isopeptide (Lys-Gly) (interchain with G-Cter in SUMO1); alternate linkage. Lysine 163 participates in a covalent cross-link: Glycyl lysine isopeptide (Lys-Gly) (interchain with G-Cter in SUMO2); alternate. The residue at position 198 (lysine 198) is an N6-acetyllysine. The segment at 209 to 337 (ILDLISESPI…RPGDRYDGMV (129 aa)) is interaction with ZIK1. Serine 214 and serine 216 each carry phosphoserine. Lysine 219 is covalently cross-linked (Glycyl lysine isopeptide (Lys-Gly) (interchain with G-Cter in SUMO2); alternate). At lysine 219 the chain carries N6-succinyllysine; alternate. The segment at 236–273 (YGGFTMMFDDRRGRPVGFPMRGRGGFDRMPPGRGGRPM) is RNA-binding RGG-box. 3 repeat units span residues 245-250 (DRRGRP), 257-260 (GRGG), and 267-270 (GRGG). Residues 245-329 (DRRGRPVGFP…LMAYDRRGRP (85 aa)) form a 2 X 6 AA approximate repeats region. Residues 250–329 (PVGFPMRGRG…LMAYDRRGRP (80 aa)) form a disordered region. Positions 252 to 266 (GFPMRGRGGFDRMPP) are enriched in low complexity. A compositionally biased stretch (basic and acidic residues) spans 276 to 285 (SRRDYDDMSP). Serine 284 is subject to Phosphoserine. The stretch at 295-298 (GRGG) is one 3-4 repeat. Arginine 316 bears the Omega-N-methylarginine mark. A 2-2 repeat occupies 324–329 (DRRGRP). Omega-N-methylarginine is present on arginine 377. Serine 379 carries the post-translational modification Phosphoserine. Tyrosine 380 carries the phosphotyrosine modification. A KH 3 domain is found at 387 to 451 (IITTQVTIPK…DQIQNAQYLL (65 aa)). Repeat copies occupy residues 399–421 (AGSIIGKGGQRIKQIRHESGASI) and 404–407 (GKGG). Lysine 405 carries the post-translational modification N6-acetyllysine; alternate. A Glycyl lysine isopeptide (Lys-Gly) (interchain with G-Cter in SUMO2); alternate cross-link involves residue lysine 405. Residue serine 420 is modified to Phosphoserine. A Glycyl lysine isopeptide (Lys-Gly) (interchain with G-Cter in SUMO1); alternate cross-link involves residue lysine 422. Lysine 422 participates in a covalent cross-link: Glycyl lysine isopeptide (Lys-Gly) (interchain with G-Cter in SUMO2); alternate. Residue lysine 422 forms a Glycyl lysine isopeptide (Lys-Gly) (interchain with G-Cter in SUMO); alternate linkage.

As to quaternary structure, identified in the spliceosome C complex. Part of a transcription inhibitory ribonucleoprotein complex composed at least of the circular RNA circZNF827, ZNF827 and HNRNPL. Interacts with RBM42 and ZIK1. Interacts with BRDT. Interacts with ANKRD28. Interacts with ASFV p30 protein. Interacts with DDX1. Interacts with MDM2; this interaction leads to ubiquitination and proteasomal degradation. Interacts with p53/TP53. Interacts with IVNS1ABP (via BACK domain); the interaction is direct. Interacts with PPIA/CYPA. (Microbial infection) Interacts with HCV core protein. Arg-296 and Arg-299 are dimethylated, probably to asymmetric dimethylarginine. Post-translationally, sumoylated by CBX4. Sumoylation is increased upon DNA damage, such as that produced by doxorubicin, etoposide, UV light and camptothecin, due to enhanced CBX4 phosphorylation by HIPK2 under these conditions. In terms of processing, ubiquitinated by MDM2. Doxorubicin treatment does not affect monoubiquitination, but slightly decreases HNRNPK poly-ubiquitination. O-glycosylated (O-GlcNAcylated), in a cell cycle-dependent manner.

It is found in the cytoplasm. The protein resides in the nucleus. Its subcellular location is the nucleoplasm. The protein localises to the cell projection. It localises to the podosome. One of the major pre-mRNA-binding proteins. Binds tenaciously to poly(C) sequences. Likely to play a role in the nuclear metabolism of hnRNAs, particularly for pre-mRNAs that contain cytidine-rich sequences. Can also bind poly(C) single-stranded DNA. Plays an important role in p53/TP53 response to DNA damage, acting at the level of both transcription activation and repression. When sumoylated, acts as a transcriptional coactivator of p53/TP53, playing a role in p21/CDKN1A and 14-3-3 sigma/SFN induction. As far as transcription repression is concerned, acts by interacting with long intergenic RNA p21 (lincRNA-p21), a non-coding RNA induced by p53/TP53. This interaction is necessary for the induction of apoptosis, but not cell cycle arrest. As part of a ribonucleoprotein complex composed at least of ZNF827, HNRNPL and the circular RNA circZNF827 that nucleates the complex on chromatin, may negatively regulate the transcription of genes involved in neuronal differentiation. This is Heterogeneous nuclear ribonucleoprotein K (HNRNPK) from Homo sapiens (Human).